The chain runs to 274 residues: Probable formate transporter (274 aa).

The next 7 helical transmembrane spans lie at Ile31–Val51, Ala62–Ile82, Val118–Leu138, Ala176–Ala196, Ile200–Glu220, Met226–Asn246, and Leu248–Trp268.

Belongs to the FNT transporter (TC 1.A.16) family.

Its subcellular location is the cell membrane. Functionally, may act as a formate transporter. This Methanothermobacter thermautotrophicus (Methanobacterium thermoformicicum) protein is Probable formate transporter (fdhC).